We begin with the raw amino-acid sequence, 288 residues long: MDATVIDELQQILPIEQLRSTHASNDYVERPPAPCKQALSSPSLIVQTHKSDWSLATMPTALPRSISQCHQLQPLPQHLSQSSISSSMSQSTTASDQRLLASITPSPSGQSIIRTQPGAGAHPKVDGALKGEAEQSVGHSSDHLFICEECGRCKCVPCTAVRPLPSCWMCNQRCLCSAESLLDYGTCLCCVKGLFYHCSTDDEDNCADEPCSCGPSSCFIRWAAMSLISLFLPCLCCYLPTRGCLHMCQQGYDSLRRPGCRCKRHTNTVCRKISSSSSPFPKAQEKSV.

Positions 154–267 constitute an SPR domain; it reads KCVPCTAVRP…PGCRCKRHTN (114 aa).

This sequence belongs to the sprouty family. In terms of assembly, interacts with TESK1. Interacts with USP11. Interacts with CAV1 (via C-terminus). Expressed in the brain with expression the highest in Purkinje cell bodies and projections in the cerebellum (at protein level). Also expressed in central and peripheral nervous system ganglion cells, superior cervical ganglion and dorsal root ganglion (at protein level). Expressed in the retinal ganglion cell layer and the inner nuclear layer (at protein level).

It localises to the cytoplasm. Functionally, inhibits neurite branching, arbor length and neurite complexity. Inhibits EGF-mediated p42/44 ERK signaling. Negatively regulates the MAPK cascade, resulting in a reduction of extracellular matrix protein accumulation. May function as an antagonist of fibroblast growth factor (FGF) pathways and may negatively modulate respiratory organogenesis. This Mus musculus (Mouse) protein is Protein sprouty homolog 3.